Here is a 230-residue protein sequence, read N- to C-terminus: 2-amino-5-formylamino-6-ribosylaminopyrimidin-4(3H)-one 5'-monophosphate deformylase (230 aa).

Residues Glu-29, His-31, Asp-40, and His-109 each contribute to the Fe cation site.

The protein belongs to the creatininase superfamily. FAPy deformylase family. As to quaternary structure, homodimer. Fe(2+) is required as a cofactor. It depends on Zn(2+) as a cofactor.

It carries out the reaction 2-amino-5-formylamino-6-(5-phospho-D-ribosylamino)pyrimidin-4(3H)-one + H2O = 2,5-diamino-6-(1-D-ribosylamino)pyrimidin-4(3H)-one 5'-phosphate + formate + H(+). It participates in cofactor biosynthesis; coenzyme F420 biosynthesis. The protein operates within cofactor biosynthesis; riboflavin biosynthesis. In terms of biological role, catalyzes the hydrolysis of the formamide of 2-amino-5-formylamino-6-ribosylamino-4(3H)-pyrimidinone 5'-monophosphate (FAPy) to form 2,5-diamino-6-ribosylamino-4(3H)-pyrimidinone 5'-phosphate (APy). This is 2-amino-5-formylamino-6-ribosylaminopyrimidin-4(3H)-one 5'-monophosphate deformylase from Methanobrevibacter smithii (strain ATCC 35061 / DSM 861 / OCM 144 / PS).